We begin with the raw amino-acid sequence, 150 residues long: Large ribosomal subunit protein bL9 (150 aa).

This sequence belongs to the bacterial ribosomal protein bL9 family.

In terms of biological role, binds to the 23S rRNA. The chain is Large ribosomal subunit protein bL9 from Streptococcus agalactiae serotype III (strain NEM316).